A 376-amino-acid chain; its full sequence is Mitogen-activated protein kinase 4 (376 aa).

A Protein kinase domain is found at 43–329 (VPPLRPIGRG…VDEALCHPYL (287 aa)). Residues 49-57 (IGRGAYGIV) and lysine 72 contribute to the ATP site. Aspartate 169 functions as the Proton acceptor in the catalytic mechanism. A Phosphothreonine modification is found at threonine 201. The short motif at 201-203 (TEY) is the TXY element. Tyrosine 203 carries the post-translational modification Phosphotyrosine.

Belongs to the protein kinase superfamily. CMGC Ser/Thr protein kinase family. MAP kinase subfamily. As to quaternary structure, interacts with MEKK1, MKK1, MKK2 and MKK6. May form a ternary complex composed of MEKK1 and MKK1/MKK2 and MPK4. Interacts with MKS1 and AP2C1. May form a ternary or larger complex with MKS1 and WRKY25 and/or WRKY33. Interacts with MAP65-1. No interactions with RACK1A, RACK1B or RACK1C. Interacts directly with ASR3 and mediates its phosphorylation. Binds to MEKK2. Interacts with PAT1. Binds to HT1. Dually phosphorylated on Thr-201 and Tyr-203, which activates the enzyme. Autophosphorylated on serine and tyrosine residues. Dephosphorylated by DSPTP1. Phosphorylated by MKK6 in vitro. Ubiquitous. Expressed in the veins and stomatal guard cells of leaf plates, petioles, stem, roots and flowers.

The protein localises to the cytoplasm. It localises to the nucleus. It is found in the cytoskeleton. It carries out the reaction L-seryl-[protein] + ATP = O-phospho-L-seryl-[protein] + ADP + H(+). It catalyses the reaction L-threonyl-[protein] + ATP = O-phospho-L-threonyl-[protein] + ADP + H(+). Activated by threonine and tyrosine phosphorylation. Activated by the MAP kinase kinases MKK1 and MKK2. Activated in response to touch, wounding, low temperature, low humidity, salt stress and the bacterial elicitors flagellin and harpin. Activated upon Pseudomonas syringae pv. tomato DC3000 infection. Repressed by the protein phosphatase 2C AP2C1. Repressed by DSPTP1-mediated dephosphorylation. Activated by the MAP kinase kinase MKK6 in vitro. The ANPs-MKK6-MPK4 module is involved in the regulation of plant cytokinesis during meiosis and mitosis. Essential to promote the progression of cytokinesis and for cellularization (formation of the cell plate) during male-specific meiosis. Involved in cortical microtubules organization and stabilization by regulating the phosphorylation state of microtubule-associated proteins such as MAP65-1. Involved in root hair development process. Negative regulator of systemic acquired resistance (SAR) and salicylic acid- (SA) mediated defense response. Required for jasmonic acid- (JA) mediated defense gene expression. May regulate activity of transcription factor controlling pathogenesis-related (PR) gene expression. Seems to act independently of the SAR regulatory protein NPR1 (Nonexpresser of PR1). Phosphorylates MKS1 and transcription factors WRKY25 and WRKY33. The MEKK1, MKK1/MKK2 and MPK4 function in a signaling pathway that modulates the expression of genes responding to biotic and abiotic stresses and also plays an important role in pathogen defense by negatively regulating innate immunity. Phosphorylates MEKK2 upon treatment with flg22. Involved in stomatal movement regulation by repressing HT1 and HT1-mediated GHR1 phosphorylation. The polypeptide is Mitogen-activated protein kinase 4 (Arabidopsis thaliana (Mouse-ear cress)).